An 80-amino-acid polypeptide reads, in one-letter code: MSTAIWILLIIVALTAGLFGGIFIARKQIEKEIGEHPRLTPEAIREMMSQMGQKPSEAKIQQTYRNIVKQSKAAMTKGKK.

The chain crosses the membrane as a helical span at residues 4–24; the sequence is AIWILLIIVALTAGLFGGIFI.

It belongs to the UPF0154 family.

The protein resides in the cell membrane. This is UPF0154 protein SZO_03240 from Streptococcus equi subsp. zooepidemicus (strain H70).